We begin with the raw amino-acid sequence, 308 residues long: ATP synthase gamma chain (308 aa).

This sequence belongs to the ATPase gamma chain family. F-type ATPases have 2 components, CF(1) - the catalytic core - and CF(0) - the membrane proton channel. CF(1) has five subunits: alpha(3), beta(3), gamma(1), delta(1), epsilon(1). CF(0) has three main subunits: a, b and c.

The protein localises to the cell membrane. In terms of biological role, produces ATP from ADP in the presence of a proton gradient across the membrane. The gamma chain is believed to be important in regulating ATPase activity and the flow of protons through the CF(0) complex. The polypeptide is ATP synthase gamma chain (Lacticaseibacillus casei (strain BL23) (Lactobacillus casei)).